The sequence spans 516 residues: NAD(P)H-quinone oxidoreductase chain 4, chloroplastic (516 aa).

14 helical membrane passes run 4–24 (FPWLTIIVVFPILTGSLIFLL), 37–57 (LCICILELLLTTYTFCYHFQL), 87–107 (IGPILLTGFITTLATLAAWPV), 111–131 (AQLFHFLMLAMYSGQIGSFSS), 134–154 (LLLFFLMWEFELIPVYLLLSM), 167–187 (FILYTAGGSIFLLIGVLGIGL), 208–228 (ALEVIFYVGFLIAFAVKLPII), 242–262 (HYSTCMLLAGILLKMGAYGLV), 272–292 (AHCLFSPGLIIVGAIQIIYAA), 305–325 (IAYSSISHMGFIIIGIGSLSD), 330–350 (GAILQIISHGFIGAALFFLAG), 386–406 (LALPGLSGFVAELLVFFGIIT), 416–436 (ILIAFLMAIGMILTPIYSLSM), and 462–482 (LFVSISLLLPIIGIGIYPDFV).

This sequence belongs to the complex I subunit 4 family.

The protein resides in the plastid. The protein localises to the chloroplast thylakoid membrane. The enzyme catalyses a plastoquinone + NADH + (n+1) H(+)(in) = a plastoquinol + NAD(+) + n H(+)(out). The catalysed reaction is a plastoquinone + NADPH + (n+1) H(+)(in) = a plastoquinol + NADP(+) + n H(+)(out). In Oenothera argillicola (Appalachian evening primrose), this protein is NAD(P)H-quinone oxidoreductase chain 4, chloroplastic.